A 240-amino-acid polypeptide reads, in one-letter code: Uridylate kinase (240 aa).

13–16 (KASG) lines the ATP pocket. Gly55 lines the UMP pocket. 2 residues coordinate ATP: Gly56 and Arg60. Residues Asp75 and 136–143 (TGNPFFTT) each bind UMP. The ATP site is built by Thr163, Gln164, Tyr169, and Asp172.

This sequence belongs to the UMP kinase family. As to quaternary structure, homohexamer.

The protein resides in the cytoplasm. The enzyme catalyses UMP + ATP = UDP + ADP. Its pathway is pyrimidine metabolism; CTP biosynthesis via de novo pathway; UDP from UMP (UMPK route): step 1/1. Its activity is regulated as follows. Inhibited by UTP. Its function is as follows. Catalyzes the reversible phosphorylation of UMP to UDP. This chain is Uridylate kinase, found in Mesorhizobium japonicum (strain LMG 29417 / CECT 9101 / MAFF 303099) (Mesorhizobium loti (strain MAFF 303099)).